A 723-amino-acid chain; its full sequence is MFRSHASGNKKQWSKRSSNGSTPAASASGSHAYRQQTLSSFFMGCGKKSAAASKNSTTIIDLESGDEGNRNITAPPRPRLIRNNSSSLFSQSQGSFGDDDPDAEFKKLVDVPRLNSYKKSSRSLSMTSSLHKTASASTTQKTYHFDEDETLREVTSVKSNSRQLSFTSTINIEDSSMKLSTDSERPAKRSKPSMEFQGLKLTVPKKIKPLLRKTVSNMDSMNHRSASSPVVLTMEQERVVNLIVKKRTNVFYTGSAGTGKSVILQTIIRQLSSLYGKESIAITASTGLAAVTIGGSTLHKWSGIGIGNKTIDQLVKKIQSQKDLLAAWRYTKVLIIDEISMVDGNLLDKLEQIARRIRKNDDPFGGIQLVLTGDFFQLPPVAKKDEHNVVKFCFESEMWKRCIQKTILLTKVFRQQDNKLIDILNAIRYGELTVDIAKTIRNLNRDIDYADGIAPTELYATRREVELSNVKKLQSLPGDLYEFKAVDNAPERYQAILDSSLMVEKVVALKEDAQVMMLKNKPDVELVNGSLGKVLFFVTESLVVKMKEIYKIVDDEVVMDMRLVSRVIGNPLLKESKEFRQDLNARPLARLERLKILINYAVKISPHKEKFPYVRWTVGKNKYIHELMVPERFPIDIPRENVGLERTQIPLMLCWALSIHKAQGQTIQRLKVDLRRIFEAGQVYVALSRAVTMDTLQVLNFDPGKIRTNERVKDFYKRLETLK.

Disordered regions lie at residues 1-31 and 61-101; these read MFRS…SGSH and DLES…DDDP. Position 64 is a phosphoserine (S64). Positions 83-96 are enriched in low complexity; it reads NNSSSLFSQSQGSF. 254–261 serves as a coordination point for ATP; sequence GSAGTGKS. The DNA-binding element occupies 682-701; that stretch reads QVYVALSRAVTMDTLQVLNF.

Belongs to the helicase family. As to quaternary structure, interacts with DEF1 and POL30.

The protein localises to the nucleus. It localises to the chromosome. Its subcellular location is the telomere. It catalyses the reaction Couples ATP hydrolysis with the unwinding of duplex DNA at the replication fork by translocating in the 5'-3' direction. This creates two antiparallel DNA single strands (ssDNA). The leading ssDNA polymer is the template for DNA polymerase III holoenzyme which synthesizes a continuous strand.. The catalysed reaction is ATP + H2O = ADP + phosphate + H(+). Functionally, 5' to 3' DNA replicative helicase recruited to paused replisomes to promote fork progression throughout nonhistone protein-DNA complexes, naturally occurring impediments that are encountered in each S phase where replication forks pauses. Needed for normal fork progression through over 1000 discrete sites scattered throughout the genome, like rDNA, tRNA genes, centromeres, active replication origins, or transcriptional silencers. Required for timely replication of the telomere and subtelomeric DNA and for wild-type levels of telomeric silencing. Involved in regulation of Ty1 transposition and protects the genome from instability at nascent sites of retrotransposition. Involved in DNA repair during stalled replication fork, regulation of fragile sites expression and essential for genome stability. Also plays a role in mtDNA replication. Has G-quadruplex (G4) unwinding activity and can suppress G4-induced genome instability when PIF1 levels are low. This chain is ATP-dependent DNA helicase RRM3, found in Saccharomyces cerevisiae (strain ATCC 204508 / S288c) (Baker's yeast).